A 657-amino-acid chain; its full sequence is MTQLTAGKPAPLGASFDGKGVNFTLFSAHAERVELCVFDREGNEYRYDLPAREGDIWHGYLEDGKPGLRYGFRVHGPWQPEYGLRFNPAKLLIDPCALRVDGDVKDDPLFLDGEQQPDPRDSAAIAPRSVVVSDVYDWEGDSSPDIPWGNTVIYEAHVKGLTYLHPAIPKEIRGTYKALGHPVMIAYLKHLGITSLELLPIWHFASEPRLQRLGLTNYWGYNPLAMFALDPRYASHPERARDEFRDAVKALHQAGIEVILDVVLNHSAELDLDGPTLSLRGIDNRSYYWIREDGDYHNWTGCGNTLNLSHPAVAEYAHACLKYWVETFHIDGFRFDLASVMGRTPAFSQQAPLLEAIKNCPVLSRVKLIAEPWDIGEGGYQVGNFPPPFAEWNDHYRDATRRFWLEKSLSLGEFAGRFSASSDVFKRQGRKPFSTVNLVTAHDGFTLRDCVCFNQKHNEANGEENRDGTNNNHSFNHGIEGLGGSQDVIERRRASVHALLTTLLLSQGTPMLLAGDEHGHSQHGNNNAYCQDNPLTWLDWEQANSGLTHFTAALIQLRQRIPALTADTWWEEGDGNVRWLNKDAQPLSAQEWQNGMPCLQILLSDNWLITFNATQDVVEIVLPDGEWRAIPPFAGEDNPVVVAVWHGPAHGVCVFQR.

Asp336 (nucleophile) is an active-site residue. The active-site Proton donor is Glu371. The disordered stretch occupies residues Ala460 to Ile479.

Belongs to the glycosyl hydrolase 13 family.

It catalyses the reaction Hydrolysis of (1-&gt;6)-alpha-D-glucosidic linkages to branches with degrees of polymerization of three or four glucose residues in limit dextrin.. Its pathway is glycan degradation; glycogen degradation. Removes maltotriose and maltotetraose chains that are attached by 1,6-alpha-linkage to the limit dextrin main chain, generating a debranched limit dextrin. In Enterobacter sp. (strain 638), this protein is Glycogen debranching enzyme.